The chain runs to 114 residues: MKFLLPSIVIFLVLCQVFGEELGPKEDLDYWTGSNQVQDEWLQADPFREIIRRMTRKPRPHQFIGLMGKRSPANAQITRKRHKINSFVGLMGKRSQEEPESYEWGTVQIYDKRR.

The N-terminal stretch at 1–19 (MKFLLPSIVIFLVLCQVFG) is a signal peptide. Positions 20–55 (EELGPKEDLDYWTGSNQVQDEWLQADPFREIIRRMT) are excised as a propeptide. 2 positions are modified to methionine amide: methionine 67 and methionine 91.

It belongs to the tachykinin family. In terms of tissue distribution, expressed in all parts of the brain, with robust expression in the olfactory bulbs and tracts, moderate expression in the hypothalamus and posterior brain, and weak expression in the telencephalon-preoptic region and optic tectum-thalamus. Also expressed in nerve fibers, intestine, testes and pituitary gland. Not expressed in the liver or kidneys.

The protein resides in the secreted. In terms of biological role, tachykinins are active peptides which excite neurons, evoke behavioral responses, are potent vasodilators and secretagogues, and contract (directly or indirectly) many smooth muscles. Functionally, substance P produces a voltage-dependent inhibition of calcium current in retinal bipolar cells. It can enhance learning and memory, may regulate social approach and feeding behaviors, and can accelerate the functional recovery in postural balance in response to light after unilateral labyrinthectomy. This is Protachykinin from Carassius auratus (Goldfish).